The sequence spans 297 residues: Calponin-1 (297 aa).

The Calponin-homology (CH) domain occupies 28 to 131 (HQREQELREW…STLLALASMA (104 aa)). Calponin-like repeat units follow at residues 164–189 (IGLQ…RHLY), 204–229 (ISLQ…RQIF), and 243–268 (VSLQ…RQVY). Thr-170 bears the Phosphothreonine; by ROCK2 mark. A Phosphoserine; by ROCK2 modification is found at Ser-175. 2 positions are modified to phosphothreonine; by ROCK2: Thr-180 and Thr-184. A Phosphothreonine; by ROCK2 modification is found at Thr-259.

The protein belongs to the calponin family.

In terms of biological role, thin filament-associated protein that is implicated in the regulation and modulation of smooth muscle contraction. It is capable of binding to actin, calmodulin and tropomyosin. The interaction of calponin with actin inhibits the actomyosin Mg-ATPase activity. In Bos taurus (Bovine), this protein is Calponin-1 (CNN1).